Consider the following 143-residue polypeptide: MRLEKSLVLIKPDAVERNLIGKILEVYEGAGLKIKAMEMKQINKDFAEKHYEEHRDKQFFNSLIKYITRSPLVALILEGEDAIDKIRSLNGATNPEKAEFGTIRRRFALSGTENSVHASDSIESAEKEIKLWFPKVFYEEICG.

ATP is bound by residues K11, F59, R87, T93, R104, and N114. H117 (pros-phosphohistidine intermediate) is an active-site residue.

This sequence belongs to the NDK family. In terms of assembly, homotetramer. It depends on Mg(2+) as a cofactor.

The protein localises to the cytoplasm. The enzyme catalyses a 2'-deoxyribonucleoside 5'-diphosphate + ATP = a 2'-deoxyribonucleoside 5'-triphosphate + ADP. It catalyses the reaction a ribonucleoside 5'-diphosphate + ATP = a ribonucleoside 5'-triphosphate + ADP. Functionally, major role in the synthesis of nucleoside triphosphates other than ATP. The ATP gamma phosphate is transferred to the NDP beta phosphate via a ping-pong mechanism, using a phosphorylated active-site intermediate. In Clostridium perfringens (strain SM101 / Type A), this protein is Nucleoside diphosphate kinase.